Reading from the N-terminus, the 576-residue chain is Potassium-transporting ATPase potassium-binding subunit (576 aa).

A run of 12 helical transmembrane segments spans residues 3–23 (IFLDIFSFILFFGILTIISPI), 68–88 (LYALLSFNFLGFLVLFLTLLF), 137–157 (GLALQNFLSAASGIVVALVLI), 179–199 (ILYVLLPVAFFSALFLVSQGV), 267–287 (FEAFLIILIPASLVFTFGYMI), 294–314 (WFLYSVMLFVLMLFMGIQYYF), 339–359 (FGIGGTVLFSSITTATSCGAV), 369–389 (LGGLVPMSLISLGEIIFGGVG), 391–411 (GLYGMIAMVIIAVFVAGLMIG), 430–450 (VVITLVSGITALLLTTLALYT), 495–515 (ITTGLAMLIGRFIPIIAVFYM), and 537–557 (LVFGVWLVFIIIVVGALTFLP).

The protein belongs to the KdpA family. The system is composed of three essential subunits: KdpA, KdpB and KdpC.

The protein resides in the cell inner membrane. In terms of biological role, part of the high-affinity ATP-driven potassium transport (or Kdp) system, which catalyzes the hydrolysis of ATP coupled with the electrogenic transport of potassium into the cytoplasm. This subunit binds the periplasmic potassium ions and delivers the ions to the membrane domain of KdpB through an intramembrane tunnel. This Hydrogenobaculum sp. (strain Y04AAS1) protein is Potassium-transporting ATPase potassium-binding subunit.